The chain runs to 3305 residues: Apolipophorins (3305 aa).

A signal peptide spans 1–23 (MGKSNRLLSVLFVISVLWKAAYG). In terms of domain architecture, Vitellogenin spans 39–640 (FAAGQKYNYG…SQTSFLPRSV (602 aa)). N-linked (GlcNAc...) asparagine glycans are attached at residues asparagine 643 and asparagine 2769. The VWFD domain maps to 2733–2899 (LRAVVVNGQH…NSYRLSRSCP (167 aa)). Cysteines 2757 and 2898 form a disulfide.

Post-translationally, cleaved into 2 chains by furin protease. However, prevention of cleavage does not impair its function. N-glycosylated.

Its subcellular location is the secreted. In terms of biological role, constitutes the major component of lipophorin, which mediates transport for various types of lipids in hemolymph. Acts by forming lipoprotein particles that bind lipoproteins and lipids. May be required for morphogens wingless (wg) and hedgehog (hh) function, possibly by acting as vehicles for the movement of wg and hh. The polypeptide is Apolipophorins (Manduca sexta (Tobacco hawkmoth)).